A 492-amino-acid chain; its full sequence is MVPREQAEEAIVADSNGKEEEVGVMGVSAGEHGADDHHGGGGKFSMKNLLWHGGSVWDAWFSCASNQVAQVLLTLPYSFSQLGMLSGVLLQLFYGFMGSWTAYLISVLYVEYRSRKEKEGVSFKNHVIQWFEVLDGLLGPYWKAAGLAFNCTFLLFGSVIQLIACASNIYYINDRLDKRTWTYIFGACCATTVFIPSFHNYRIWSFLGLGMTTYTAWYLAIAALLNGQAEGITHTGPTKLVLYFTGATNILYTFGGHAVTVEIMHAMWKPAKFKYIYLLATLYVFTLTLPSASAMYWAFGDELLTHSNAFSLLPKTGWRDAAVILMLIHQFITFGFACTPLYFVWEKVIGMHDTKSICLRALARLPIVVPIWFLAIIFPFFGPINSAVGALLVSFTVYIIPALAHILTYRTASARMNAAEKPPFFLPSWTGMFVLNMFIVVWVLVVGFGLGGWASMVNFIRQIDTFGLFAKCYQCPKPAPALAQSPVPLPHH.

Topologically, residues 1–67 (MVPREQAEEA…DAWFSCASNQ (67 aa)) are cytoplasmic. A helical membrane pass occupies residues 68–85 (VAQVLLTLPYSFSQLGML). The Extracellular segment spans residues 86–87 (SG). A helical membrane pass occupies residues 88 to 108 (VLLQLFYGFMGSWTAYLISVL). The Cytoplasmic portion of the chain corresponds to 109-143 (YVEYRSRKEKEGVSFKNHVIQWFEVLDGLLGPYWK). The chain crosses the membrane as a helical span at residues 144-164 (AAGLAFNCTFLLFGSVIQLIA). Residues 165-180 (CASNIYYINDRLDKRT) are Extracellular-facing. A helical transmembrane segment spans residues 181 to 201 (WTYIFGACCATTVFIPSFHNY). Arg202 is a topological domain (cytoplasmic). Residues 203–223 (IWSFLGLGMTTYTAWYLAIAA) form a helical membrane-spanning segment. The Extracellular portion of the chain corresponds to 224-240 (LLNGQAEGITHTGPTKL). The chain crosses the membrane as a helical span at residues 241–261 (VLYFTGATNILYTFGGHAVTV). Topologically, residues 262-274 (EIMHAMWKPAKFK) are cytoplasmic. The helical transmembrane segment at 275 to 295 (YIYLLATLYVFTLTLPSASAM) threads the bilayer. At 296–322 (YWAFGDELLTHSNAFSLLPKTGWRDAA) the chain is on the extracellular side. Residues 323–343 (VILMLIHQFITFGFACTPLYF) traverse the membrane as a helical segment. The Cytoplasmic segment spans residues 344 to 364 (VWEKVIGMHDTKSICLRALAR). The helical transmembrane segment at 365–385 (LPIVVPIWFLAIIFPFFGPIN) threads the bilayer. A topological domain (extracellular) is located at residue Ser386. The chain crosses the membrane as a helical span at residues 387 to 407 (AVGALLVSFTVYIIPALAHIL). Residues 408-432 (TYRTASARMNAAEKPPFFLPSWTGM) lie on the Cytoplasmic side of the membrane. Residues 433 to 453 (FVLNMFIVVWVLVVGFGLGGW) form a helical membrane-spanning segment. Over 454 to 492 (ASMVNFIRQIDTFGLFAKCYQCPKPAPALAQSPVPLPHH) the chain is Extracellular.

Belongs to the amino acid/polyamine transporter 2 family. Amino acid/auxin permease (AAAP) (TC 2.A.18.1) subfamily.

Its subcellular location is the cell membrane. Carrier protein involved in proton-driven auxin influx. May mediate the formation of auxin gradient from developing leaves (site of auxin biosynthesis) to tips. This chain is Auxin transporter-like protein 1, found in Oryza sativa subsp. japonica (Rice).